The sequence spans 170 residues: uncharacterized protein (170 aa).

A run of 3 helical transmembrane segments spans residues 31 to 51 (ILAVVNGSITIILSIIVFYIF), 58 to 78 (LFLITAGILTVFVFLYGLLLF), and 133 to 153 (IDFIVMIGMITISVIVVMLLF).

To M.jannaschii MJ0554 and MJ0587.

Its subcellular location is the cell membrane. This is an uncharacterized protein from Methanocaldococcus jannaschii (strain ATCC 43067 / DSM 2661 / JAL-1 / JCM 10045 / NBRC 100440) (Methanococcus jannaschii).